A 462-amino-acid polypeptide reads, in one-letter code: Transcription initiation factor TFIID subunit 7-like (462 aa).

2 disordered regions span residues 1–97 and 327–366; these read MECP…VPDE and DSRS…SEEY. Low complexity-rich tracts occupy residues 16 to 30 and 66 to 77; these read STPT…SQQE and DADSSAQAAAQA. The span at 333–365 shows a compositional bias: acidic residues; that stretch reads DDDEDEDDEDEDEDEDEDEDEDKEEEEEDCSEE. Positions 342–462 form a coiled coil; that stretch reads DEDEDEDEDE…QEQLQRFLKK (121 aa).

This sequence belongs to the TAF7 family. As to quaternary structure, TFIID is composed of TATA binding protein (TBP) and a number of TBP-associated factors (TAFs). TAF7L may replace TAF7 in a spermatogenesis-specific form of TFIID. Interacts with TBP; the interaction occurs in a sub-population of cells (pachytene and haploid round spermatids) and is developmentally regulated through differential intracellular localization of the two proteins. Interacts with TAF1. As to expression, testis-specific.

The protein resides in the nucleus. The protein localises to the cytoplasm. Probably functions as a spermatogenesis-specific component of the DNA-binding general transcription factor complex TFIID, a multimeric protein complex that plays a central role in mediating promoter responses to various activators and repressors. May play a role in spermatogenesis. This Homo sapiens (Human) protein is Transcription initiation factor TFIID subunit 7-like (TAF7L).